The primary structure comprises 327 residues: Probable cytosolic iron-sulfur protein assembly protein CIAO1 homolog (327 aa).

WD repeat units lie at residues Gly-3–Lys-42, Gly-48–Asn-87, Gly-92–Cys-131, Ser-137–Cys-176, Gly-181–Gly-220, Tyr-239–Gln-278, and Ala-290–Glu-327.

This sequence belongs to the WD repeat CIA1 family.

In terms of biological role, essential component of the cytosolic iron-sulfur (Fe/S) protein assembly machinery. Required for the maturation of extramitochondrial Fe/S proteins. This Nematostella vectensis (Starlet sea anemone) protein is Probable cytosolic iron-sulfur protein assembly protein CIAO1 homolog.